The chain runs to 608 residues: RAS guanyl-releasing protein 2 (608 aa).

An N-terminal Ras-GEF domain is found at threonine 4–threonine 126. Residues serine 116, serine 117, and serine 147 each carry the phosphoserine modification. The Ras-GEF domain occupies glutamate 154–arginine 387. The disordered stretch occupies residues leucine 382–leucine 407. EF-hand domains lie at histidine 426–leucine 461 and alanine 463–methionine 490. The Ca(2+) site is built by aspartate 439, aspartate 441, aspartate 443, histidine 445, glutamate 450, aspartate 468, asparagine 470, aspartate 472, cysteine 474, and glutamate 479. The Phorbol-ester/DAG-type zinc-finger motif lies at valine 498–cysteine 548. Residues serine 554 and serine 575 each carry the phosphoserine modification. The interval serine 556–isoleucine 591 is disordered.

It belongs to the RASGRP family. In terms of assembly, forms a signaling complex with RAP1 and BRAF. Interacts with RAP1. Interacts with F-actin.

Its subcellular location is the cytoplasm. The protein localises to the cytosol. It is found in the cell membrane. It localises to the synapse. The protein resides in the synaptosome. Its subcellular location is the cell projection. The protein localises to the ruffle membrane. In terms of biological role, functions as a calcium- and DAG-regulated nucleotide exchange factor specifically activating Rap through the exchange of bound GDP for GTP. May also activate other GTPases such as RRAS, RRAS2, NRAS, KRAS but not HRAS. Functions in aggregation of platelets and adhesion of T-lymphocytes and neutrophils probably through inside-out integrin activation. May function in the muscarinic acetylcholine receptor M1/CHRM1 signaling pathway. This chain is RAS guanyl-releasing protein 2 (RASGRP2), found in Bos taurus (Bovine).